Consider the following 299-residue polypeptide: N-acetylmuramic acid 6-phosphate etherase (299 aa).

Positions 54 to 217 (TIAQYKKGGR…STITMVGVGK (164 aa)) constitute an SIS domain. The active-site Proton donor is the glutamate 82. Residue glutamate 113 is part of the active site.

Belongs to the GCKR-like family. MurNAc-6-P etherase subfamily. Homodimer.

The enzyme catalyses N-acetyl-D-muramate 6-phosphate + H2O = N-acetyl-D-glucosamine 6-phosphate + (R)-lactate. It functions in the pathway amino-sugar metabolism; N-acetylmuramate degradation. Its function is as follows. Specifically catalyzes the cleavage of the D-lactyl ether substituent of MurNAc 6-phosphate, producing GlcNAc 6-phosphate and D-lactate. This is N-acetylmuramic acid 6-phosphate etherase from Staphylococcus aureus (strain USA300).